The chain runs to 378 residues: Chaperone protein DnaJ (378 aa).

A J domain is found at Asp5 to Gly69. Residues Gly135–Asn217 form a CR-type zinc finger. The Zn(2+) site is built by Cys148, Cys151, Cys165, Cys168, Cys191, Cys194, Cys205, and Cys208. CXXCXGXG motif repeat units follow at residues Cys148 to Gly155, Cys165 to Gly172, Cys191 to Gly198, and Cys205 to Gly212.

This sequence belongs to the DnaJ family. In terms of assembly, homodimer. It depends on Zn(2+) as a cofactor.

The protein resides in the cytoplasm. Participates actively in the response to hyperosmotic and heat shock by preventing the aggregation of stress-denatured proteins and by disaggregating proteins, also in an autonomous, DnaK-independent fashion. Unfolded proteins bind initially to DnaJ; upon interaction with the DnaJ-bound protein, DnaK hydrolyzes its bound ATP, resulting in the formation of a stable complex. GrpE releases ADP from DnaK; ATP binding to DnaK triggers the release of the substrate protein, thus completing the reaction cycle. Several rounds of ATP-dependent interactions between DnaJ, DnaK and GrpE are required for fully efficient folding. Also involved, together with DnaK and GrpE, in the DNA replication of plasmids through activation of initiation proteins. The sequence is that of Chaperone protein DnaJ from Staphylococcus saprophyticus subsp. saprophyticus (strain ATCC 15305 / DSM 20229 / NCIMB 8711 / NCTC 7292 / S-41).